We begin with the raw amino-acid sequence, 574 residues long: Protein misato (574 aa).

Belongs to the misato family.

It localises to the mitochondrion. This chain is Protein misato (mst), found in Drosophila melanogaster (Fruit fly).